The chain runs to 130 residues: uncharacterized protein (130 aa).

An N-terminal signal peptide occupies residues 1–26 (MINNFKGILIIILSFLFLLLFKYSNA). Asn-58 carries an N-linked (GlcNAc...) asparagine glycan.

This sequence belongs to the Dictyostelium gerABC family.

It localises to the secreted. This is an uncharacterized protein from Dictyostelium discoideum (Social amoeba).